The sequence spans 273 residues: uncharacterized protein (273 aa).

The segment covering 1-10 has biased composition (basic residues); the sequence is MSSKKVKYNP. Disordered stretches follow at residues 1–32 and 50–124; these read MSSK…FGFN and EDVE…QSSP. Polar residues-rich tracts occupy residues 12 to 24, 55 to 64, and 92 to 124; these read KSAS…SASA, QSFNGKSSNL, and PQSS…QSSP. Residue Ser123 is modified to Phosphoserine.

The protein localises to the nucleus. Its subcellular location is the cytoplasm. It is found in the cytoskeleton. The protein resides in the spindle. This is an uncharacterized protein from Schizosaccharomyces pombe (strain 972 / ATCC 24843) (Fission yeast).